A 219-amino-acid polypeptide reads, in one-letter code: Large ribosomal subunit protein uL1 (219 aa).

This sequence belongs to the universal ribosomal protein uL1 family. In terms of assembly, component of the large ribosomal subunit.

It localises to the cytoplasm. The polypeptide is Large ribosomal subunit protein uL1 (RPL1) (Encephalitozoon cuniculi (strain GB-M1) (Microsporidian parasite)).